Here is a 404-residue protein sequence, read N- to C-terminus: tRNA (carboxymethyluridine(34)-5-O)-methyltransferase (404 aa).

Phosphoserine is present on Ser-238.

In terms of assembly, interacts with TRM112A and TRM112B.

It catalyses the reaction 5-(carboxymethyl)uridine(34) in tRNA + S-adenosyl-L-methionine = 5-(2-methoxy-2-oxoethyl)uridine(34) in tRNA + S-adenosyl-L-homocysteine. Its function is as follows. Catalyzes the methylation of 5-carboxymethyl uridine to 5-methylcarboxymethyl uridine at the wobble position of the anticodon loop in tRNA via its methyltransferase domain. Catalyzes the last step in the formation of 5-methylcarboxymethyl uridine at the wobble position of the anticodon loop in target tRNA. This Arabidopsis thaliana (Mouse-ear cress) protein is tRNA (carboxymethyluridine(34)-5-O)-methyltransferase.